The following is a 344-amino-acid chain: Follistatin (344 aa).

Residues 1–29 (MVCARHQPGGLCLLLLLLCQFMEDRSAQA) form the signal peptide. Positions 30–103 (GNCWLRQAKN…TCENVDCGPG (74 aa)) constitute a TB domain. Cystine bridges form between Cys-32–Cys-55, Cys-42–Cys-88, Cys-56–Cys-91, Cys-95–Cys-106, Cys-100–Cys-116, Cys-118–Cys-150, Cys-122–Cys-143, Cys-132–Cys-164, Cys-168–Cys-179, Cys-173–Cys-189, Cys-192–Cys-225, Cys-196–Cys-218, Cys-207–Cys-239, Cys-245–Cys-256, Cys-250–Cys-267, Cys-270–Cys-302, Cys-274–Cys-295, and Cys-284–Cys-316. Positions 94 to 117 (TCENVDCGPGKKCRMNKKNKPRCV) constitute a Follistatin-like 1 domain. In terms of domain architecture, Kazal-like 1 spans 112–166 (NKPRCVCAPDCSNITWKGPVCGLDGKTYRNECALLKARCKEQPELEVQYQGKCKK). N-linked (GlcNAc...) asparagine glycosylation occurs at Asn-124. Residues 167–190 (TCRDVFCPGSSTCVVDQTNNAYCV) form the Follistatin-like 2 domain. One can recognise a Kazal-like 2 domain in the interval 186-241 (NAYCVTCNRICPEPSSSEQSLCGNDGVTYSSACHLRKATCLLGRSIGLAYEGKCIK). One can recognise a Follistatin-like 3 domain in the interval 244–268 (SCEDIQCGGGKKCLWDFKVGRGRCS). One can recognise a Kazal-like 3 domain in the interval 264 to 318 (RGRCSLCDELCPDSKSDEPVCASDNATYASECAMKEAACSSGVLLEVKHSGSCNS). The N-linked (GlcNAc...) asparagine glycan is linked to Asn-288. The segment at 315–344 (SCNSISEETEEEEEEEDQDYSFPISSTLEW) is disordered. The segment covering 321 to 333 (EETEEEEEEEDQD) has biased composition (acidic residues).

As to quaternary structure, interacts with GDF11. Interacts with activin A/INHBA. Interacts with myostatin/MSTN.

The protein localises to the secreted. It localises to the nucleus. It is found in the nucleolus. In terms of biological role, multifunctional regulatory protein whose primary function is to antagonize members of the transforming growth factor beta (TGF-beta) superfamily including activin, myostatin, GDF11 or bone morphogenetic proteins (BMPs). Mechanistically, binds to these ligands in the extracellular space, blocking their type II receptor-binding site to inhibit downstream signaling. Plays an essential role in muscle fiber formation and growth both by preventing the repressive effects of myostatin and through SMAD3/AKT/mTOR signaling independently of myostatin. Also promotes neural differentiation by antagonizing the action BMP4. Acts as a specific inhibitor of the biosynthesis and secretion of pituitary follicle stimulating hormone (FSH) by sequestering activin A/INHBA. On the other hand, translocates into the nucleus where it down-regulates rRNA synthesis and ribosome biogenesis to maintain cellular energy homeostasis by binding to rDNA. The protein is Follistatin of Rattus norvegicus (Rat).